A 533-amino-acid chain; its full sequence is Probable lipid II flippase MurJ (533 aa).

A run of 14 helical transmembrane segments spans residues 11-31 (LANIAGIVAIATLISKVFGLL), 39-61 (AFGVGTVVTAYAYAYVIPGFLFI), 96-116 (LVSGVLLGVTIILVLGAGIFI), 135-155 (LQIMAPMALLSGLIGIGFGTL), 166-186 (ISPLLSSITVILGLGVAVWQL), 196-216 (WLLGSLLLAGGTTAGAVLQWL), 253-273 (LSSGMLYINFATNLFFASFIP), 284-304 (FVALTPLGIISNMILVPFLPV), 330-350 (LTMFPLTAILVGLAIPIVQVI), 360-380 (AAAEVAPVLAAYGLGMFFYLG), 400-420 (VSLFNIFLNGLLDYLFYKPFG), 422-442 (VGIVMATVGVNLFSMTIFIWM), 452-472 (LGGWAMDLGKLVGVTAIASVA), and 493-513 (ILEVLTMSSIILVVFTVGVAL).

This sequence belongs to the MurJ/MviN family.

The protein localises to the cell inner membrane. Its pathway is cell wall biogenesis; peptidoglycan biosynthesis. Functionally, involved in peptidoglycan biosynthesis. Transports lipid-linked peptidoglycan precursors from the inner to the outer leaflet of the cytoplasmic membrane. The sequence is that of Probable lipid II flippase MurJ from Synechocystis sp. (strain ATCC 27184 / PCC 6803 / Kazusa).